The following is a 212-amino-acid chain: Thiamine-phosphate synthase (212 aa).

Residues Gln35–Lys39 and Asn67 each bind 4-amino-2-methyl-5-(diphosphooxymethyl)pyrimidine. Residues Asp68 and Asp87 each coordinate Mg(2+). Ser106 lines the 4-amino-2-methyl-5-(diphosphooxymethyl)pyrimidine pocket. A 2-[(2R,5Z)-2-carboxy-4-methylthiazol-5(2H)-ylidene]ethyl phosphate-binding site is contributed by Thr132–Ser134. Lys135 provides a ligand contact to 4-amino-2-methyl-5-(diphosphooxymethyl)pyrimidine. Residues Gly163 and Ile183–Ser184 each bind 2-[(2R,5Z)-2-carboxy-4-methylthiazol-5(2H)-ylidene]ethyl phosphate.

It belongs to the thiamine-phosphate synthase family. Requires Mg(2+) as cofactor.

The enzyme catalyses 2-[(2R,5Z)-2-carboxy-4-methylthiazol-5(2H)-ylidene]ethyl phosphate + 4-amino-2-methyl-5-(diphosphooxymethyl)pyrimidine + 2 H(+) = thiamine phosphate + CO2 + diphosphate. The catalysed reaction is 2-(2-carboxy-4-methylthiazol-5-yl)ethyl phosphate + 4-amino-2-methyl-5-(diphosphooxymethyl)pyrimidine + 2 H(+) = thiamine phosphate + CO2 + diphosphate. It catalyses the reaction 4-methyl-5-(2-phosphooxyethyl)-thiazole + 4-amino-2-methyl-5-(diphosphooxymethyl)pyrimidine + H(+) = thiamine phosphate + diphosphate. The protein operates within cofactor biosynthesis; thiamine diphosphate biosynthesis; thiamine phosphate from 4-amino-2-methyl-5-diphosphomethylpyrimidine and 4-methyl-5-(2-phosphoethyl)-thiazole: step 1/1. In terms of biological role, condenses 4-methyl-5-(beta-hydroxyethyl)thiazole monophosphate (THZ-P) and 2-methyl-4-amino-5-hydroxymethyl pyrimidine pyrophosphate (HMP-PP) to form thiamine monophosphate (TMP). The chain is Thiamine-phosphate synthase from Methanocella arvoryzae (strain DSM 22066 / NBRC 105507 / MRE50).